A 2263-amino-acid polypeptide reads, in one-letter code: Collagen alpha-6(VI) chain (2263 aa).

The first 19 residues, methionine 1 to glutamine 19, serve as a signal peptide directing secretion. The nonhelical region stretch occupies residues aspartate 20 to isoleucine 1391. 5 VWFA domains span residues aspartate 27–valine 206, aspartate 229–isoleucine 411, aspartate 436–valine 606, aspartate 622–leucine 791, and aspartate 809–valine 982. Residues asparagine 198, asparagine 275, asparagine 288, asparagine 347, and asparagine 520 are each glycosylated (N-linked (GlcNAc...) asparagine). N-linked (GlcNAc...) asparagine glycans are attached at residues asparagine 930 and asparagine 988. 2 VWFA domains span residues aspartate 1000 to isoleucine 1171 and aspartate 1187 to leucine 1371. Residue asparagine 1290 is glycosylated (N-linked (GlcNAc...) asparagine). A triple-helical region region spans residues glycine 1392 to glycine 1725. The interval methionine 1397 to alanine 1723 is disordered. Residues threonine 1498–arginine 1508 show a composition bias toward basic and acidic residues. The short motif at arginine 1508 to aspartate 1510 is the Cell attachment site element. Basic residues predominate over residues serine 1547 to histidine 1559. The segment covering glycine 1680–glycine 1689 has biased composition (gly residues). Residues leucine 1726–aspartate 2263 are nonhelical region. VWFA domains lie at glutamate 1757–glutamine 1937 and aspartate 1965–isoleucine 2166.

It belongs to the type VI collagen family. Trimers composed of three different chains: alpha-1(VI), alpha-2(VI), and alpha-3(VI) or alpha-5(VI) or alpha-6(VI). Prolines at the third position of the tripeptide repeating unit (G-X-Y) are hydroxylated in some or all of the chains.

The protein resides in the secreted. Its subcellular location is the extracellular space. The protein localises to the extracellular matrix. Its function is as follows. Collagen VI acts as a cell-binding protein. In Homo sapiens (Human), this protein is Collagen alpha-6(VI) chain (COL6A6).